Reading from the N-terminus, the 101-residue chain is Acylphosphatase-1 (101 aa).

Residue S2 is modified to N-acetylserine. The residue at position 2 (S2) is an N-acetylalanine. The 91-residue stretch at 11–101 (SVDYEVFGKV…LDYSDFQIVK (91 aa)) folds into the Acylphosphatase-like domain. Catalysis depends on residues R26 and N44.

Belongs to the acylphosphatase family. As to expression, organ-common type isozyme is found in many different tissues.

It carries out the reaction an acyl phosphate + H2O = a carboxylate + phosphate + H(+). The sequence is that of Acylphosphatase-1 (ACYP1) from Sus scrofa (Pig).